Here is a 263-residue protein sequence, read N- to C-terminus: uncharacterized protein (263 aa).

31-38 (GPTGSGKT) provides a ligand contact to ATP.

The protein belongs to the CbbQ/NirQ/NorQ/GpvN family.

This is an uncharacterized protein from Staphylococcus aureus (strain USA300).